The primary structure comprises 202 residues: Amelogenin (202 aa).

Ser16 carries the phosphoserine modification. The tract at residues 77 to 202 (QPAPPQQPVM…TDKTKREEVD (126 aa)) is disordered. The segment covering 78–87 (PAPPQQPVMP) has biased composition (pro residues). A compositionally biased stretch (low complexity) spans 101 to 112 (QPNLPQPGQQPY). The span at 113–125 (QPQPAQQPQPHQP) shows a compositional bias: pro residues. A compositionally biased stretch (low complexity) spans 126-158 (IQPIQPIQPIQPMQPMQPMQPMQPMQPMQPQTP). Residues 164–176 (PLPPQPPLPPMFP) show a composition bias toward pro residues.

Belongs to the amelogenin family.

It localises to the secreted. The protein localises to the extracellular space. Its subcellular location is the extracellular matrix. Plays a role in the biomineralization of teeth. Seems to regulate the formation of crystallites during the secretory stage of tooth enamel development. Thought to play a major role in the structural organization and mineralization of developing enamel. The sequence is that of Amelogenin (AMEL) from Monodelphis domestica (Gray short-tailed opossum).